A 295-amino-acid polypeptide reads, in one-letter code: Probable alpha-L-glutamate ligase 1 (295 aa).

Residues 104–287 (MQLLSRKGIG…VANAIIEFIE (184 aa)) form the ATP-grasp domain. ATP contacts are provided by residues Lys-141, 178–179 (EY), Asp-187, and 211–213 (RSN). Asp-248, Glu-260, and Asn-262 together coordinate Mg(2+). Mn(2+) contacts are provided by Asp-248, Glu-260, and Asn-262.

The protein belongs to the RimK family. Mg(2+) serves as cofactor. Requires Mn(2+) as cofactor.

The protein is Probable alpha-L-glutamate ligase 1 of Shewanella denitrificans (strain OS217 / ATCC BAA-1090 / DSM 15013).